Here is a 352-residue protein sequence, read N- to C-terminus: Protein RecA (352 aa).

67–74 (GPESSGKT) is an ATP binding site.

This sequence belongs to the RecA family.

The protein localises to the cytoplasm. Its function is as follows. Can catalyze the hydrolysis of ATP in the presence of single-stranded DNA, the ATP-dependent uptake of single-stranded DNA by duplex DNA, and the ATP-dependent hybridization of homologous single-stranded DNAs. It interacts with LexA causing its activation and leading to its autocatalytic cleavage. This is Protein RecA from Aggregatibacter actinomycetemcomitans (Actinobacillus actinomycetemcomitans).